The sequence spans 356 residues: Uroporphyrinogen decarboxylase (356 aa).

Residues R33, A35, R37, R46, D82, Y159, S214, and H334 each coordinate coproporphyrinogen I. The coproporphyrinogen III site is built by R33, A35, and R37. 4 residues coordinate coproporphyrinogen III: D82, Y159, S214, and H334.

It belongs to the uroporphyrinogen decarboxylase family. As to quaternary structure, homodimer.

It localises to the cytoplasm. Its subcellular location is the cytosol. It catalyses the reaction uroporphyrinogen III + 4 H(+) = coproporphyrinogen III + 4 CO2. Its pathway is porphyrin-containing compound metabolism; protoporphyrin-IX biosynthesis; coproporphyrinogen-III from 5-aminolevulinate: step 4/4. In terms of biological role, catalyzes the decarboxylation of four acetate groups of uroporphyrinogen-III to yield coproporphyrinogen-III. The polypeptide is Uroporphyrinogen decarboxylase (Drosophila melanogaster (Fruit fly)).